The chain runs to 426 residues: Serine--tRNA ligase (426 aa).

233 to 235 (TAE) lines the L-serine pocket. ATP is bound at residue 264 to 266 (RSE). Glu-287 provides a ligand contact to L-serine. Residue 351-354 (EISS) coordinates ATP. L-serine is bound at residue Ser-387.

This sequence belongs to the class-II aminoacyl-tRNA synthetase family. Type-1 seryl-tRNA synthetase subfamily. In terms of assembly, homodimer. The tRNA molecule binds across the dimer.

It is found in the cytoplasm. It catalyses the reaction tRNA(Ser) + L-serine + ATP = L-seryl-tRNA(Ser) + AMP + diphosphate + H(+). It carries out the reaction tRNA(Sec) + L-serine + ATP = L-seryl-tRNA(Sec) + AMP + diphosphate + H(+). It participates in aminoacyl-tRNA biosynthesis; selenocysteinyl-tRNA(Sec) biosynthesis; L-seryl-tRNA(Sec) from L-serine and tRNA(Sec): step 1/1. Catalyzes the attachment of serine to tRNA(Ser). Is also able to aminoacylate tRNA(Sec) with serine, to form the misacylated tRNA L-seryl-tRNA(Sec), which will be further converted into selenocysteinyl-tRNA(Sec). The protein is Serine--tRNA ligase of Clostridium botulinum (strain Kyoto / Type A2).